Here is a 251-residue protein sequence, read N- to C-terminus: uncharacterized protein (251 aa).

This is an uncharacterized protein from Bacillus subtilis (strain 168).